The chain runs to 96 residues: Myticin-B (96 aa).

The signal sequence occupies residues 1 to 20; that stretch reads MKATMLLAVVVAVFVAGTEA. Residues 61-96 constitute a propeptide, removed in mature form; sequence VKFPFGATQDAKSMNELEYTPIMKSMENLDNGMDML.

Contains four disulfide bonds. Hemocytes.

Its subcellular location is the secreted. Its function is as follows. Bacteriolytic activity against Gram-positive bacteria M.luteus, B.megaterium and A.viridans and Gram-negative bacteria E.coli D31. Possesses antifungal activity against F.oxysporum. This chain is Myticin-B, found in Mytilus galloprovincialis (Mediterranean mussel).